A 166-amino-acid chain; its full sequence is Small ribosomal subunit protein uS5 (166 aa).

The 64-residue stretch at Leu-11–Val-74 folds into the S5 DRBM domain.

The protein belongs to the universal ribosomal protein uS5 family. As to quaternary structure, part of the 30S ribosomal subunit. Contacts proteins S4 and S8.

Functionally, with S4 and S12 plays an important role in translational accuracy. Its function is as follows. Located at the back of the 30S subunit body where it stabilizes the conformation of the head with respect to the body. This chain is Small ribosomal subunit protein uS5, found in Francisella tularensis subsp. tularensis (strain FSC 198).